Consider the following 345-residue polypeptide: Phenylalanine--tRNA ligase alpha subunit (345 aa).

E255 contributes to the Mg(2+) binding site.

It belongs to the class-II aminoacyl-tRNA synthetase family. Phe-tRNA synthetase alpha subunit type 1 subfamily. As to quaternary structure, tetramer of two alpha and two beta subunits. The cofactor is Mg(2+).

It localises to the cytoplasm. It catalyses the reaction tRNA(Phe) + L-phenylalanine + ATP = L-phenylalanyl-tRNA(Phe) + AMP + diphosphate + H(+). This is Phenylalanine--tRNA ligase alpha subunit from Lysinibacillus sphaericus (strain C3-41).